A 442-amino-acid polypeptide reads, in one-letter code: Septin-8 (442 aa).

Over residues 1 to 16 (MAATDLERVSSAEPEP) the composition is skewed to basic and acidic residues. Residues 1 to 23 (MAATDLERVSSAEPEPRSLSLGG) form a disordered region. Ala-2 carries the post-translational modification N-acetylalanine. Ser-10 carries the post-translational modification Phosphoserine. Residues 41–307 (QGFSFNILCV…ELYRRCKLEE (267 aa)) form the Septin-type G domain. A G1 motif region spans residues 51 to 58 (GETGIGKS). GTP-binding positions include 51-58 (GETGIGKS), Gly-106, 187-195 (KADTISKSE), Gly-241, and Arg-256. Positions 103–106 (DAVG) are G3 motif. The tract at residues 186–189 (AKAD) is G4 motif. Residues 322–410 (LQETYEAKRK…RKAAVEALQS (89 aa)) are a coiled coil. Residues 377–391 (HQEEKRKVEEKRREL) show a composition bias toward basic and acidic residues. Positions 377-442 (HQEEKRKVEE…WSSIYSVTIP (66 aa)) are disordered. Composition is skewed to polar residues over residues 408–420 (LQSQ…SQQP) and 432–442 (GWSSIYSVTIP).

It belongs to the TRAFAC class TrmE-Era-EngA-EngB-Septin-like GTPase superfamily. Septin GTPase family. As to quaternary structure, septins polymerize into heterooligomeric protein complexes that form filaments, and can associate with cellular membranes, actin filaments and microtubules. GTPase activity is required for filament formation. Interacts with CDK14, SEPTIN4, SEPTIN5 and SEPTIN7. Interacts with VAMP2; the interaction inhibits interaction of VAMP2 with SYP. Interacts with STX1A.

The protein resides in the cytoplasm. The protein localises to the cytoskeleton. It localises to the synapse. It is found in the cell projection. Its subcellular location is the axon. The protein resides in the cytoplasmic vesicle. The protein localises to the secretory vesicle. It localises to the synaptic vesicle membrane. It is found in the presynapse. Functionally, filament-forming cytoskeletal GTPase. May play a role in platelet secretion. Seems to participate in the process of SNARE complex formation in synaptic vesicles. The sequence is that of Septin-8 from Otolemur garnettii (Small-eared galago).